A 134-amino-acid polypeptide reads, in one-letter code: Profilin-2 (134 aa).

A disulfide bridge links C13 with C118. Positions 84–100 (AVIRGKKGSGGITIKKT) match the Involved in PIP2 interaction motif. Residue T114 is modified to Phosphothreonine.

Belongs to the profilin family. In terms of assembly, occurs in many kinds of cells as a complex with monomeric actin in a 1:1 ratio. In terms of processing, phosphorylated by MAP kinases.

Its subcellular location is the cytoplasm. The protein localises to the cytoskeleton. Binds to actin and affects the structure of the cytoskeleton. At high concentrations, profilin prevents the polymerization of actin, whereas it enhances it at low concentrations. The chain is Profilin-2 from Olea europaea (Common olive).